A 371-amino-acid polypeptide reads, in one-letter code: Cyanide hydratase (371 aa).

In terms of domain architecture, CN hydrolase spans 8 to 286; the sequence is YKAAAVQAEP…EGLMFVEIDL (279 aa). Glutamate 48 serves as the catalytic Proton acceptor. Lysine 130 is an active-site residue. Cysteine 165 serves as the catalytic Nucleophile. The tract at residues 326–356 is disordered; it reads DGGIGTYNTQDRVGLNRPLDAPKVDGPSGVS.

It belongs to the carbon-nitrogen hydrolase superfamily. Nitrilase family. In terms of assembly, oligomer of dimers, forming left-handed helical fibers.

It carries out the reaction formamide = hydrogen cyanide + H2O. Functionally, catalyzes the hydration of cyanide to formamide. Degradation of cyanide may be important for plant pathogenic fungi in infection of cyanogenic plants. Can also transform some nitriles like 2-cyanopyridine and fumaronitrile and has a minor activity with 4-cyanophenyl acetonitrile (4-CPA). The protein is Cyanide hydratase of Botryotinia fuckeliana (strain T4) (Noble rot fungus).